Consider the following 154-residue polypeptide: Transcription antitermination protein NusB (154 aa).

It belongs to the NusB family.

Involved in transcription antitermination. Required for transcription of ribosomal RNA (rRNA) genes. Binds specifically to the boxA antiterminator sequence of the ribosomal RNA (rrn) operons. This Hyphomonas neptunium (strain ATCC 15444) protein is Transcription antitermination protein NusB.